Consider the following 107-residue polypeptide: Large ribosomal subunit protein uL24 (107 aa).

This sequence belongs to the universal ribosomal protein uL24 family. In terms of assembly, part of the 50S ribosomal subunit.

Its function is as follows. One of two assembly initiator proteins, it binds directly to the 5'-end of the 23S rRNA, where it nucleates assembly of the 50S subunit. Functionally, one of the proteins that surrounds the polypeptide exit tunnel on the outside of the subunit. In Streptomyces griseus subsp. griseus (strain JCM 4626 / CBS 651.72 / NBRC 13350 / KCC S-0626 / ISP 5235), this protein is Large ribosomal subunit protein uL24.